The sequence spans 358 residues: MVSLPQDRIKQLEKRFEIIESQMTTNPNAETYVKLASEYAELQPVIASIRALNALYGEITELETIINDKQTDIEMRHLAQEELPSLHKKVEQLEKELQILLLPKDVADEKSAIVEIRAGTGGSEAALFSGDLFRMYERYAHAHHWKVEVISLSEGEVGGYKEIIATISGKGVFSKLKYESGVHRVQRIPETETGGRIHTSAATVAVLPEAEEIDIDIRPEDIRIDTMRASGAGGQHVNTTDSAVRITHIPTGIMVVQAEKSQHQNRARALQILRARLFDIERQKVESERSASRKSQVGSGDRSERIRTYNFPQGRVTDHRINLTLYKLDRILEGDLDEIIHALISDHQTALLMEMDNN.

Q235 carries the post-translational modification N5-methylglutamine. Residues 284-309 form a disordered region; that stretch reads KVESERSASRKSQVGSGDRSERIRTY.

It belongs to the prokaryotic/mitochondrial release factor family. Post-translationally, methylated by PrmC. Methylation increases the termination efficiency of RF1.

It localises to the cytoplasm. Functionally, peptide chain release factor 1 directs the termination of translation in response to the peptide chain termination codons UAG and UAA. The polypeptide is Peptide chain release factor 1 (Bartonella tribocorum (strain CIP 105476 / IBS 506)).